The primary structure comprises 1332 residues: Elongator complex protein 1 (1332 aa).

Phosphoserine occurs at positions 471, 804, 867, 1171, and 1174. The tract at residues valine 885–aspartate 1332 is mediates dimerization. Positions glutamine 1150–lysine 1208 are disordered. A compositionally biased stretch (polar residues) spans aspartate 1164–glutamate 1177. Residues alanine 1191–glutamate 1209 form a required for binding to tRNA region. Basic residues predominate over residues serine 1194 to serine 1206.

The protein belongs to the ELP1/IKA1 family. As to quaternary structure, homodimer; dimerization promotes ELP1 stability and elongator complex formation. Component of the elongator complex which consists of ELP1, ELP2, ELP3, ELP4, ELP5 and ELP6. Interacts preferentially with MAP3K14/NIK followed by IKK-alpha and IKK-beta.

The protein resides in the cytoplasm. Its subcellular location is the nucleus. Its pathway is tRNA modification; 5-methoxycarbonylmethyl-2-thiouridine-tRNA biosynthesis. Its function is as follows. Component of the elongator complex which is required for multiple tRNA modifications, including mcm5U (5-methoxycarbonylmethyl uridine), mcm5s2U (5-methoxycarbonylmethyl-2-thiouridine), and ncm5U (5-carbamoylmethyl uridine). The elongator complex catalyzes the formation of carboxymethyluridine in the wobble base at position 34 in tRNAs. Regulates the migration and branching of projection neurons in the developing cerebral cortex, through a process depending on alpha-tubulin acetylation. ELP1 binds to tRNA, mediating interaction of the elongator complex with tRNA. May act as a scaffold protein that assembles active IKK-MAP3K14 complexes (IKKA, IKKB and MAP3K14/NIK). The polypeptide is Elongator complex protein 1 (Homo sapiens (Human)).